We begin with the raw amino-acid sequence, 413 residues long: Cardiolipin synthase B (413 aa).

2 PLD phosphodiesterase domains span residues 108–135 and 285–312; these read VFRR…SAEH and RRRP…DPLS. Catalysis depends on residues His113, Lys115, Asp120, His290, Lys292, and Asp297. The disordered stretch occupies residues 390–413; it reads VDPPAQPTMETQDRVETENTGVKP.

The protein belongs to the phospholipase D family. Cardiolipin synthase subfamily. ClsB sub-subfamily.

The protein localises to the cell membrane. The catalysed reaction is 2 a 1,2-diacyl-sn-glycero-3-phospho-(1'-sn-glycerol) = a cardiolipin + glycerol. Functionally, catalyzes the phosphatidyl group transfer from one phosphatidylglycerol molecule to another to form cardiolipin (CL) (diphosphatidylglycerol) and glycerol. The polypeptide is Cardiolipin synthase B (Escherichia coli O157:H7).